Reading from the N-terminus, the 385-residue chain is Signal transduction histidine-protein kinase/phosphatase DegS (385 aa).

The stretch at 31 to 141 (QIGEQSRQQY…IERSESLVSQ (111 aa)) forms a coiled coil. Ser76 is modified (phosphoserine). The region spanning 183 to 385 (RVSREIHDGP…FIMIKVPLSL (203 aa)) is the Histidine kinase domain. A Phosphohistidine; by autocatalysis modification is found at His189.

Post-translationally, autophosphorylated. Phosphorylated in vitro at Ser-76 by the serine/threonine-protein kinase YbdM, which stimulates the phosphate transfer to DegU.

It localises to the cytoplasm. The enzyme catalyses ATP + protein L-histidine = ADP + protein N-phospho-L-histidine.. Regulated via serine phosphorylation of its input domain. Phosphotransfer from DegS to DegU is stimulated by phosphorylation on Ser-76 and by DegQ. Member of the two-component regulatory system DegS/DegU, which plays an important role in the transition growth phase. Involved in the control of expression of different cellular functions, including production of degradative enzymes such as the neutral and alkaline proteases, flagellum formation and biofilm formation. Acts both as a protein kinase that undergoes autophosphorylation and subsequently transfers the phosphate to DegU, and as a protein phosphatase that dephosphorylates phospho-DegU. In Bacillus subtilis (strain 168), this protein is Signal transduction histidine-protein kinase/phosphatase DegS (degS).